The chain runs to 441 residues: Probable dihydroorotase-like protein (441 aa).

The segment at 121-140 (VNAHHQPPGDPQAENRPDSA) is disordered.

It belongs to the metallo-dependent hydrolases superfamily. DHOase family. PyrC' subfamily.

Non-functional DHOase. This chain is Probable dihydroorotase-like protein (pyrC'), found in Synechocystis sp. (strain ATCC 27184 / PCC 6803 / Kazusa).